Reading from the N-terminus, the 133-residue chain is Interleukin-5 (133 aa).

The signal sequence occupies residues 1-20 (MRRMLLHLSVLTLSCVWATA). 3 N-linked (GlcNAc...) asparagine glycosylation sites follow: asparagine 46, asparagine 75, and asparagine 89.

It belongs to the IL-5 family. Homodimer; disulfide-linked. Interacts with IL5RA. Interacts with CSF2RB. Expressed in lymphoid cells, including spleen, thymus, lymph nodes and peripheral blood mononuclear cells.

It is found in the secreted. Functionally, homodimeric cytokine expressed predominantly by T-lymphocytes and NK cells that plays an important role in the survival, differentiation, and chemotaxis of eosinophils. Also acts on activated and resting B-cells to induce immunoglobulin production, growth, and differentiation. Mechanistically, exerts its biological effects through a receptor composed of IL5RA subunit and the cytokine receptor common subunit beta/CSF2RB. Binding to the receptor leads to activation of various kinases including LYN, SYK and JAK2 and thereby propagates signals through the RAS-MAPK and JAK-STAT5 pathways respectively. The sequence is that of Interleukin-5 (Il5) from Mus musculus (Mouse).